Here is a 522-residue protein sequence, read N- to C-terminus: Maturase K (522 aa).

It belongs to the intron maturase 2 family. MatK subfamily.

It localises to the plastid. Its subcellular location is the chloroplast. Its function is as follows. Usually encoded in the trnK tRNA gene intron. Probably assists in splicing its own and other chloroplast group II introns. The protein is Maturase K of Iris tenax (Oregon iris).